Consider the following 273-residue polypeptide: Dermonecrotic toxin LhSicTox-alphaIA1i (273 aa).

His5 is an active-site residue. Glu25 and Asp27 together coordinate Mg(2+). The active-site Nucleophile is the His41. Intrachain disulfides connect Cys45/Cys51 and Cys47/Cys190. Asp85 is a Mg(2+) binding site.

This sequence belongs to the arthropod phospholipase D family. Class II subfamily. The cofactor is Mg(2+). Expressed by the venom gland.

It localises to the secreted. It carries out the reaction an N-(acyl)-sphingosylphosphocholine = an N-(acyl)-sphingosyl-1,3-cyclic phosphate + choline. It catalyses the reaction an N-(acyl)-sphingosylphosphoethanolamine = an N-(acyl)-sphingosyl-1,3-cyclic phosphate + ethanolamine. The enzyme catalyses a 1-acyl-sn-glycero-3-phosphocholine = a 1-acyl-sn-glycero-2,3-cyclic phosphate + choline. The catalysed reaction is a 1-acyl-sn-glycero-3-phosphoethanolamine = a 1-acyl-sn-glycero-2,3-cyclic phosphate + ethanolamine. Dermonecrotic toxins cleave the phosphodiester linkage between the phosphate and headgroup of certain phospholipids (sphingolipid and lysolipid substrates), forming an alcohol (often choline) and a cyclic phosphate. This toxin acts on sphingomyelin (SM). It may also act on ceramide phosphoethanolamine (CPE), lysophosphatidylcholine (LPC) and lysophosphatidylethanolamine (LPE), but not on lysophosphatidylserine (LPS), and lysophosphatidylglycerol (LPG). It acts by transphosphatidylation, releasing exclusively cyclic phosphate products as second products. Induces dermonecrosis, hemolysis, increased vascular permeability, edema, inflammatory response, and platelet aggregation. This Loxosceles hirsuta (Recluse spider) protein is Dermonecrotic toxin LhSicTox-alphaIA1i.